The sequence spans 448 residues: Methylenetetrahydrofolate--tRNA-(uracil-5-)-methyltransferase TrmFO (448 aa).

An FAD-binding site is contributed by Gly13–Gly18.

Belongs to the MnmG family. TrmFO subfamily. FAD is required as a cofactor.

The protein resides in the cytoplasm. The enzyme catalyses uridine(54) in tRNA + (6R)-5,10-methylene-5,6,7,8-tetrahydrofolate + NADH + H(+) = 5-methyluridine(54) in tRNA + (6S)-5,6,7,8-tetrahydrofolate + NAD(+). It catalyses the reaction uridine(54) in tRNA + (6R)-5,10-methylene-5,6,7,8-tetrahydrofolate + NADPH + H(+) = 5-methyluridine(54) in tRNA + (6S)-5,6,7,8-tetrahydrofolate + NADP(+). Functionally, catalyzes the folate-dependent formation of 5-methyl-uridine at position 54 (M-5-U54) in all tRNAs. This is Methylenetetrahydrofolate--tRNA-(uracil-5-)-methyltransferase TrmFO from Streptococcus pyogenes serotype M18 (strain MGAS8232).